The following is a 442-amino-acid chain: Histidine--tRNA ligase (442 aa).

The interval 416 to 442 (SGDETTVPVEEFPPEGGEELPTYEDYE) is disordered. Residues 427–442 (FPPEGGEELPTYEDYE) are compositionally biased toward acidic residues.

It belongs to the class-II aminoacyl-tRNA synthetase family.

It is found in the cytoplasm. The catalysed reaction is tRNA(His) + L-histidine + ATP = L-histidyl-tRNA(His) + AMP + diphosphate + H(+). The protein is Histidine--tRNA ligase of Halorubrum lacusprofundi (strain ATCC 49239 / DSM 5036 / JCM 8891 / ACAM 34).